Here is a 425-residue protein sequence, read N- to C-terminus: Gamma-glutamyl phosphate reductase (425 aa).

This sequence belongs to the gamma-glutamyl phosphate reductase family.

The protein localises to the cytoplasm. The catalysed reaction is L-glutamate 5-semialdehyde + phosphate + NADP(+) = L-glutamyl 5-phosphate + NADPH + H(+). Its pathway is amino-acid biosynthesis; L-proline biosynthesis; L-glutamate 5-semialdehyde from L-glutamate: step 2/2. Its function is as follows. Catalyzes the NADPH-dependent reduction of L-glutamate 5-phosphate into L-glutamate 5-semialdehyde and phosphate. The product spontaneously undergoes cyclization to form 1-pyrroline-5-carboxylate. The protein is Gamma-glutamyl phosphate reductase of Novosphingobium aromaticivorans (strain ATCC 700278 / DSM 12444 / CCUG 56034 / CIP 105152 / NBRC 16084 / F199).